The following is a 493-amino-acid chain: Ketol-acid reductoisomerase (NADP(+)) (493 aa).

Residues 15–208 form the KARI N-terminal Rossmann domain; that stretch reads AQLGKCRFMQ…GGDRAGVLES (194 aa). Residues 45-48, R68, R76, S78, and 108-110 contribute to the NADP(+) site; these read CGAQ and DKQ. H132 is an active-site residue. G158 contacts NADP(+). 2 consecutive KARI C-terminal knotted domains span residues 209 to 344 and 345 to 486; these read SFVA…NAPA and FAGK…MKDM. The Mg(2+) site is built by D217, E221, E389, and E393. S414 contributes to the substrate binding site.

It belongs to the ketol-acid reductoisomerase family. Mg(2+) serves as cofactor.

It catalyses the reaction (2R)-2,3-dihydroxy-3-methylbutanoate + NADP(+) = (2S)-2-acetolactate + NADPH + H(+). The catalysed reaction is (2R,3R)-2,3-dihydroxy-3-methylpentanoate + NADP(+) = (S)-2-ethyl-2-hydroxy-3-oxobutanoate + NADPH + H(+). It participates in amino-acid biosynthesis; L-isoleucine biosynthesis; L-isoleucine from 2-oxobutanoate: step 2/4. Its pathway is amino-acid biosynthesis; L-valine biosynthesis; L-valine from pyruvate: step 2/4. Its function is as follows. Involved in the biosynthesis of branched-chain amino acids (BCAA). Catalyzes an alkyl-migration followed by a ketol-acid reduction of (S)-2-acetolactate (S2AL) to yield (R)-2,3-dihydroxy-isovalerate. In the isomerase reaction, S2AL is rearranged via a Mg-dependent methyl migration to produce 3-hydroxy-3-methyl-2-ketobutyrate (HMKB). In the reductase reaction, this 2-ketoacid undergoes a metal-dependent reduction by NADPH to yield (R)-2,3-dihydroxy-isovalerate. This chain is Ketol-acid reductoisomerase (NADP(+)), found in Aeromonas hydrophila subsp. hydrophila (strain ATCC 7966 / DSM 30187 / BCRC 13018 / CCUG 14551 / JCM 1027 / KCTC 2358 / NCIMB 9240 / NCTC 8049).